Reading from the N-terminus, the 498-residue chain is ATP synthase subunit beta, chloroplastic (498 aa).

Position 172–179 (172–179 (GGAGVGKT)) interacts with ATP.

This sequence belongs to the ATPase alpha/beta chains family. As to quaternary structure, F-type ATPases have 2 components, CF(1) - the catalytic core - and CF(0) - the membrane proton channel. CF(1) has five subunits: alpha(3), beta(3), gamma(1), delta(1), epsilon(1). CF(0) has four main subunits: a(1), b(1), b'(1) and c(9-12).

The protein resides in the plastid. Its subcellular location is the chloroplast thylakoid membrane. It carries out the reaction ATP + H2O + 4 H(+)(in) = ADP + phosphate + 5 H(+)(out). In terms of biological role, produces ATP from ADP in the presence of a proton gradient across the membrane. The catalytic sites are hosted primarily by the beta subunits. The protein is ATP synthase subunit beta, chloroplastic of Schisandra sphenanthera (Southern magnolia vine).